We begin with the raw amino-acid sequence, 304 residues long: Protein translocase subunit SecF (304 aa).

6 helical membrane-spanning segments follow: residues 20–40 (AKLF…LIFT), 143–163 (AMMA…IRFE), 164–184 (LIFA…TLGF), 195–215 (TVVA…IVVF), 244–266 (LSRT…IFGG), and 276–298 (LVIG…VYLI).

The protein belongs to the SecD/SecF family. SecF subfamily. As to quaternary structure, forms a complex with SecD. Part of the essential Sec protein translocation apparatus which comprises SecA, SecYEG and auxiliary proteins SecDF. Other proteins may also be involved.

The protein localises to the cell inner membrane. Its function is as follows. Part of the Sec protein translocase complex. Interacts with the SecYEG preprotein conducting channel. SecDF uses the proton motive force (PMF) to complete protein translocation after the ATP-dependent function of SecA. This chain is Protein translocase subunit SecF, found in Calditerrivibrio nitroreducens (strain DSM 19672 / NBRC 101217 / Yu37-1).